Here is a 232-residue protein sequence, read N- to C-terminus: MSLTDTIRNTFVPIHREGYPFIAGFFVVSLILGWLWDPLFWIGMVLTVWCIYFYRDPERVTPMDDDLVISPADGKVSFVGLAVPPAELDLGYEPMTRVSVFMNVFSVHINRSPVRGKIDKVVHRPGKFLNAELDKASTENERNSVLIESPHGKIGVVQIAGLVARRIVCWSNQDDELSVGERFGLIRFGSRVDVYLPSDATVRVAVGQTAIAGETVLADYGTERGEPVVRIA.

Serine 190 acts as the Schiff-base intermediate with substrate; via pyruvic acid in catalysis. A Pyruvic acid (Ser); by autocatalysis modification is found at serine 190.

Belongs to the phosphatidylserine decarboxylase family. PSD-A subfamily. Heterodimer of a large membrane-associated beta subunit and a small pyruvoyl-containing alpha subunit. Pyruvate is required as a cofactor. Post-translationally, is synthesized initially as an inactive proenzyme. Formation of the active enzyme involves a self-maturation process in which the active site pyruvoyl group is generated from an internal serine residue via an autocatalytic post-translational modification. Two non-identical subunits are generated from the proenzyme in this reaction, and the pyruvate is formed at the N-terminus of the alpha chain, which is derived from the carboxyl end of the proenzyme. The post-translation cleavage follows an unusual pathway, termed non-hydrolytic serinolysis, in which the side chain hydroxyl group of the serine supplies its oxygen atom to form the C-terminus of the beta chain, while the remainder of the serine residue undergoes an oxidative deamination to produce ammonia and the pyruvoyl prosthetic group on the alpha chain.

It localises to the cell membrane. It catalyses the reaction a 1,2-diacyl-sn-glycero-3-phospho-L-serine + H(+) = a 1,2-diacyl-sn-glycero-3-phosphoethanolamine + CO2. It functions in the pathway phospholipid metabolism; phosphatidylethanolamine biosynthesis; phosphatidylethanolamine from CDP-diacylglycerol: step 2/2. Catalyzes the formation of phosphatidylethanolamine (PtdEtn) from phosphatidylserine (PtdSer). The chain is Phosphatidylserine decarboxylase proenzyme from Brucella abortus (strain S19).